A 229-amino-acid chain; its full sequence is Large ribosomal subunit protein uL1 (229 aa).

The protein belongs to the universal ribosomal protein uL1 family. In terms of assembly, part of the 50S ribosomal subunit.

Binds directly to 23S rRNA. The L1 stalk is quite mobile in the ribosome, and is involved in E site tRNA release. Functionally, protein L1 is also a translational repressor protein, it controls the translation of the L11 operon by binding to its mRNA. The polypeptide is Large ribosomal subunit protein uL1 (Chlorobium phaeobacteroides (strain DSM 266 / SMG 266 / 2430)).